A 109-amino-acid polypeptide reads, in one-letter code: Fluoride-specific ion channel FluC (109 aa).

3 helical membrane-spanning segments follow: residues 21-41, 52-72, and 84-104; these read LTLN…GFFV, ILFS…YFLY, and IIFF…GFWI.

The protein belongs to the fluoride channel Fluc/FEX (TC 1.A.43) family.

It localises to the cell inner membrane. It catalyses the reaction fluoride(in) = fluoride(out). Fluoride-specific ion channel. Important for reducing fluoride concentration in the cell, thus reducing its toxicity. The chain is Fluoride-specific ion channel FluC from Prochlorococcus marinus (strain MIT 9301).